The chain runs to 2797 residues: Nonribosomal peptide synthetase penN (2797 aa).

The segment at 239–625 is adenylation 1; it reads SRPDHPAICA…ARKDSQVKIR (387 aa). Residues 751–824 form the Carrier 1 domain; the sequence is TDTERHVHRF…DIVSLVRTAT (74 aa). Ser785 carries the post-translational modification O-(pantetheine 4'-phosphoryl)serine. Residues 830-856 form a disordered region; the sequence is PSAGAEISRSDAPTESPATGSFEGSGY. The interval 870 to 1299 is condensation 1; sequence QSFSQARMWF…DIEIGSLLLT (430 aa). An adenylation 2 region spans residues 1328–1731; it reads FHQQVAAHGD…GRMDQQVKIR (404 aa). The methyltransferase stretch occupies residues 1857-1953; that stretch reads LEIGTGTGMI…VIKQLIQLHD (97 aa). Residues 2277 to 2351 enclose the Carrier 2 domain; sequence SFTDDIERAM…RLAGRVRGFR (75 aa). Position 2311 is an O-(pantetheine 4'-phosphoryl)serine (Ser2311). The interval 2516-2658 is condensation 2; sequence YDGISLSSIL…VNRTLIRVQL (143 aa).

It belongs to the NRP synthetase family.

The enzyme catalyses O-methyl-L-tyrosine + anthranilate + S-adenosyl-L-methionine + 2 ATP = (-)-4'-methoxycyclopeptine + 2 AMP + S-adenosyl-L-homocysteine + 2 diphosphate + 2 H(+). The catalysed reaction is anthranilate + L-phenylalanine + S-adenosyl-L-methionine + 2 ATP = cyclopeptine + 2 AMP + S-adenosyl-L-homocysteine + 2 diphosphate + 2 H(+). It participates in secondary metabolite biosynthesis. Its pathway is alkaloid biosynthesis. The protein operates within mycotoxin biosynthesis. Its function is as follows. Nonribosomal peptide synthetase; part of the gene cluster that mediates the biosynthesis of penigequinolones, potent insecticidal alkaloids that contain a highly modified 10-carbon prenyl group. The first stage is catalyzed by the nonribosomal peptide synthetase penN that condenses anthranilic acid and O-methyl-L-tyrosine to produce 4'-methoxycyclopeptin. 4'-methoxycyclopeptin is then converted to 4'-methoxydehydrocyclopeptin by the ketoglutarate-dependent dioxygenase penM through dehydrogenation to form a double bond between C-alpha and C-beta of the O-methyltyrosine side chain. PenM also converts its first product methoxydehydrocyclopeptin to 4'-methoxycyclopenin. The following conversion of 4'methoxycyclopenin into 4'-methoxyviridicatin is catalyzed by the cyclopenase penL. 4'-methoxyviridicatin is the precursor of quinolone natural products, and is further converted to quinolinone B. The prenyltransferase penI then catalyzes the canonical Friedel-Crafts alkylation of quinolinone B with dimethylallyl cation to yield dimethylallyl quinolone, which is subjected to FAD-dependent dehydrogenation by the FAD-linked oxidoreductase penH to yield conjugated aryl diene. The delta(3') double bond then serves as the site of the second alkylation with DMAPP catalyzed by the prenyltransferase penG to yield a carbenium ion intermediate, which can be attacked by H(2)O to yield a styrenyl quinolone containing a C3'-hydroxyprenyl chain, or undergo cyclization to yield yaequinolones J1 and J2. The conversion of the styrenyl quinolone into the tetrahydrofuran-containing yaequinolone C is performed by the FAD-dependent monooxygenase penE and involves epoxidation of the terminal C7'-C8' olefin, followed by epoxide ring opening initiated by the C3' hydroxyl group. The predicted cysteine hydrolase penJ acts as an epoxide hydrolase that enhances the rate of the 5-exo-tet cyclization step, increasing the yield of yaequinolone C. PenF catalyzes the cationic rearrangement of the epoxide formed by penE (before ring opening to produce yaequinolone C) into yaequinolone D. Finally, the short-chain dehydrogenase/reductase (SDR)-like reductase penD, catalyzes both the dehydration of yaequinolone D and the reduction of the resulting oxonium to yield penigequinolone. This is Nonribosomal peptide synthetase penN from Penicillium thymicola.